Consider the following 526-residue polypeptide: Peptide chain release factor 3 (526 aa).

Positions 8–277 (DKRRTFAIIS…GLTQWAPKPQ (270 aa)) constitute a tr-type G domain. GTP contacts are provided by residues 17-24 (SHPDAGKT), 85-89 (DTPGH), and 139-142 (NKLD).

It belongs to the TRAFAC class translation factor GTPase superfamily. Classic translation factor GTPase family. PrfC subfamily.

Its subcellular location is the cytoplasm. Its function is as follows. Increases the formation of ribosomal termination complexes and stimulates activities of RF-1 and RF-2. It binds guanine nucleotides and has strong preference for UGA stop codons. It may interact directly with the ribosome. The stimulation of RF-1 and RF-2 is significantly reduced by GTP and GDP, but not by GMP. This chain is Peptide chain release factor 3, found in Actinobacillus succinogenes (strain ATCC 55618 / DSM 22257 / CCUG 43843 / 130Z).